A 151-amino-acid chain; its full sequence is Allatostatin-A (151 aa).

Residues 1-21 (MNSLHAHLLLLAVCCVGYIAS) form the signal peptide. Residues 22–54 (SPVIGQDQRSGDSDADVLLAADEMADNGGDNID) constitute a propeptide that is removed on maturation. Residues leucine 64, leucine 88, and leucine 99 each carry the leucine amide modification. The propeptide occupies 103–135 (SDYDYDQDNEIDYRVPPANYLAAERAVRPGRQN). The disordered stretch occupies residues 131–151 (PGRQNKRTTRPQPFNFGLGRR). Position 148 is a leucine amide (leucine 148).

It belongs to the allatostatin family.

Its subcellular location is the secreted. Functionally, may act as a neurotransmitter or neuromodulator. In Drosophila melanogaster (Fruit fly), this protein is Allatostatin-A (AstA).